The chain runs to 77 residues: MEVKVFRVKGVFERLGKKQPFTKEYRALKQEHVKELVYSEIGSKHRVPRTKIWIESIEEIKPEEAEDPIVRKLSLEL.

This sequence belongs to the eukaryotic ribosomal protein eL20 family. In terms of assembly, part of the 50S ribosomal subunit. Binds 23S rRNA.

The chain is Large ribosomal subunit protein eL20 from Thermococcus onnurineus (strain NA1).